The chain runs to 128 residues: Small ribosomal subunit protein uS12 (128 aa).

The segment at 1 to 24 (MPTFNQLVKYGREKRKKKSKAPAL) is disordered. Aspartate 89 bears the 3-methylthioaspartic acid mark. The interval 105-128 (AGVEGRRQSRSKYGTKRPKEEKGG) is disordered.

Belongs to the universal ribosomal protein uS12 family. In terms of assembly, part of the 30S ribosomal subunit. Contacts proteins S8 and S17. May interact with IF1 in the 30S initiation complex.

Functionally, with S4 and S5 plays an important role in translational accuracy. In terms of biological role, interacts with and stabilizes bases of the 16S rRNA that are involved in tRNA selection in the A site and with the mRNA backbone. Located at the interface of the 30S and 50S subunits, it traverses the body of the 30S subunit contacting proteins on the other side and probably holding the rRNA structure together. The combined cluster of proteins S8, S12 and S17 appears to hold together the shoulder and platform of the 30S subunit. This is Small ribosomal subunit protein uS12 from Aquifex aeolicus (strain VF5).